A 682-amino-acid polypeptide reads, in one-letter code: Activating transcription factor 7-interacting protein 2 (682 aa).

Positions 120–148 (SRTTESPSRVFTEEAKDSLNTSENDSEHQ) are disordered. The span at 137–148 (SLNTSENDSEHQ) shows a compositional bias: polar residues. Residues 328–378 (EIYSINYELFDKKLKELNQRIGKTECRNKHEGIADKLLAKIAKLQRRIKTV) are a coiled coil. Residue S416 is modified to Phosphoserine. Polar residues-rich tracts occupy residues 418–451 (IEKS…VSES) and 462–490 (ESPN…NSPN). Disordered regions lie at residues 418 to 491 (IEKS…SPNA) and 513 to 538 (NCNT…ETTP). A phosphoserine mark is found at S488 and S521. Polar residues predominate over residues 528-538 (KAASNSKETTP). Residues 575–680 (PPQKPELKVK…IKSIPGFSEN (106 aa)) form the Fibronectin type-III domain.

Belongs to the MCAF family. Interacts with MBD1, SETDB1 and SP1. Probably forms a complex with SETDB1 and MBD1.

It localises to the nucleus. Recruiter that couples transcriptional factors to general transcription apparatus and thereby modulates transcription regulation and chromatin formation. Can both act as an activator or a repressor depending on the context. Mediates MBD1-dependent transcriptional repression, probably by recruiting complexes containing SETDB1. The complex formed with MBD1 and SETDB1 represses transcription and probably couples DNA methylation and histone H3 'Lys-9' trimethylation (H3K9me3) activity. The polypeptide is Activating transcription factor 7-interacting protein 2 (ATF7IP2) (Homo sapiens (Human)).